An 87-amino-acid polypeptide reads, in one-letter code: Small ribosomal subunit protein uS15 (87 aa).

Belongs to the universal ribosomal protein uS15 family. Part of the 30S ribosomal subunit. Forms a bridge to the 50S subunit in the 70S ribosome, contacting the 23S rRNA.

In terms of biological role, one of the primary rRNA binding proteins, it binds directly to 16S rRNA where it helps nucleate assembly of the platform of the 30S subunit by binding and bridging several RNA helices of the 16S rRNA. Forms an intersubunit bridge (bridge B4) with the 23S rRNA of the 50S subunit in the ribosome. The protein is Small ribosomal subunit protein uS15 of Ruminiclostridium cellulolyticum (strain ATCC 35319 / DSM 5812 / JCM 6584 / H10) (Clostridium cellulolyticum).